Consider the following 931-residue polypeptide: Netrin receptor UNC5C (931 aa).

The N-terminal stretch at 1–40 (MRKGLRATAARCGLGLGYLLQMLVLPALALLSASGTGSAA) is a signal peptide. The Extracellular portion of the chain corresponds to 41–380 (QDDDFFHELP…APDSDDVALY (340 aa)). The Ig-like domain occupies 62-159 (PHFLIEPEEA…AGTTKSRKAY (98 aa)). 9 disulfides stabilise this stretch: Cys-83–Cys-144, Cys-95–Cys-142, Cys-188–Cys-239, Cys-272–Cys-309, Cys-276–Cys-313, Cys-287–Cys-299, Cys-328–Cys-362, Cys-332–Cys-367, and Cys-340–Cys-352. The Ig-like C2-type domain maps to 161-256 (RIAYLRKTFE…KRKSTTATVI (96 aa)). Asn-236 carries N-linked (GlcNAc...) asparagine glycosylation. TSP type-1 domains lie at 260 to 314 (NGGW…TLCP) and 316 to 368 (DGRW…GLCM). A glycan (N-linked (GlcNAc...) asparagine) is linked at Asn-361. Residues 381–401 (VGIVIAVTVCLAITVVVALFV) traverse the membrane as a helical segment. Over 402–931 (YRKNHRDFES…VVSLAAEGQY (530 aa)) the chain is Cytoplasmic. Positions 402 to 931 (YRKNHRDFES…VVSLAAEGQY (530 aa)) are required for netrin-mediated axon repulsion of neuronal growth cones. Residue Ser-502 is modified to Phosphoserine. One can recognise a ZU5 domain in the interval 530–673 (CTAFGTFNSL…LSTYALVGQS (144 aa)). Phosphotyrosine is present on Tyr-568. An interaction with DCC region spans residues 694-712 (SLEYSIRVYCLDDTQDALK). The 80-residue stretch at 850-929 (QKLCSSLDAP…ETVVSLAAEG (80 aa)) folds into the Death domain.

It belongs to the unc-5 family. In terms of assembly, interacts with DCC (via cytoplasmic domain). Interacts (tyrosine phosphorylated form) with PTPN11. Interacts (via extracellular domain) with FLRT3 (via extracellular domain). Interacts (via Ig-like C2-type domain) with DSCAM (via extracellular domain). Interacts (via death domain) with DAPK1. Interacts (via cytoplasmic domain) with TUBB3; this interaction is decreased by NTN1/Netrin-1. Proteolytically cleaved by caspases during apoptosis. The cleavage does not take place when the receptor is associated with netrin ligand. Its cleavage by caspases is required to induce apoptosis. Post-translationally, phosphorylated on different cytoplasmic tyrosine residues. Phosphorylation of Tyr-568 leads to an interaction with PTPN11 phosphatase, suggesting that its activity is regulated by phosphorylation/dephosphorylation. Tyrosine phosphorylation is netrin-dependent. In terms of tissue distribution, detected in brain (at protein level). Mainly expressed in brain. Also expressed in kidney. Not expressed in developing or adult lung.

Its subcellular location is the cell membrane. The protein resides in the cell surface. The protein localises to the synapse. It localises to the synaptosome. It is found in the cell projection. Its subcellular location is the axon. The protein resides in the dendrite. The protein localises to the growth cone. It localises to the lamellipodium. It is found in the filopodium. Functionally, receptor for netrin required for axon guidance. Mediates axon repulsion of neuronal growth cones in the developing nervous system upon ligand binding. NTN1/Netrin-1 binding might cause dissociation of UNC5C from polymerized TUBB3 in microtubules and thereby lead to increased microtubule dynamics and axon repulsion. Axon repulsion in growth cones may also be caused by its association with DCC that may trigger signaling for repulsion. Might also collaborate with DSCAM in NTN1-mediated axon repulsion independently of DCC. Also involved in corticospinal tract axon guidance independently of DCC. Involved in dorsal root ganglion axon projection towards the spinal cord. It also acts as a dependence receptor required for apoptosis induction when not associated with netrin ligand. The protein is Netrin receptor UNC5C (Unc5c) of Rattus norvegicus (Rat).